Consider the following 704-residue polypeptide: MARTTPLERYRNIGICAHVDAGKTTTTERILFYTGLSHKIGETHDGAATMDWMEQEQERGITITSAATTCFWKGMDAQFDAHRINIIDTPGHVDFTIEVERSLRVLDGAVVVLCASSGVQPQTETVWRQANKYEVPRMIFVNKMDRTGADFFAVVDQVKSRLGATPVPIQLPIGAEDGFKGVIDLIKMKAINWNEADQGMTFTYEAIPAELQELADEWRSHLVESAAEATEELMDKYLEGEELSEAEIKEALRQRTLANDIVPMTCGSAFKNKGVQAVLDCVVEYMPAPTQVKQIQGILEDGTEEERPADDKAPFAALAFKIATDPFVGTLTFFRVYSGTVKQGDAVYNPVKSKRERLGRIVQMHSNSREEIKEVFAGDIAAAIGLKDVTTGETLCDPKSIITLERMEFPEPVISVAVEPRTIADQDKMGIALGKLAAEDPSFRVQTDEESGQIIISGMGELHLDILVERMKREFSVECNVGKPQVAYREAIRSTVKVEGKFIRQSGGRGQYGHVWLKLEPMDITDDEAPIYEFVNETVGGSIPKEYVPAVDKGIQEQMSQGVLAGYPLLGVKATLYDGSFHDVDSNEMAFKIAGSLAMKQGALQASPVLLEPVMKVEVLTPEANMGDVVGDLNRRRGMIEGMEDALGGLKQINAQVPLSEMFGYATDLRSATQGRASYSMEFLKYAEASKHVAETIISARAVI.

The tr-type G domain maps to 8-290 (ERYRNIGICA…CVVEYMPAPT (283 aa)). GTP contacts are provided by residues 17-24 (AHVDAGKT), 88-92 (DTPGH), and 142-145 (NKMD).

This sequence belongs to the TRAFAC class translation factor GTPase superfamily. Classic translation factor GTPase family. EF-G/EF-2 subfamily.

The protein localises to the cytoplasm. In terms of biological role, catalyzes the GTP-dependent ribosomal translocation step during translation elongation. During this step, the ribosome changes from the pre-translocational (PRE) to the post-translocational (POST) state as the newly formed A-site-bound peptidyl-tRNA and P-site-bound deacylated tRNA move to the P and E sites, respectively. Catalyzes the coordinated movement of the two tRNA molecules, the mRNA and conformational changes in the ribosome. This Pseudoalteromonas translucida (strain TAC 125) protein is Elongation factor G 1.